The following is a 152-amino-acid chain: Large ribosomal subunit protein uL15 (152 aa).

The tract at residues M1–V79 is disordered. Gly residues predominate over residues G22–Q35.

Belongs to the universal ribosomal protein uL15 family. As to quaternary structure, part of the 50S ribosomal subunit.

Binds to the 23S rRNA. The protein is Large ribosomal subunit protein uL15 of Rubrobacter xylanophilus (strain DSM 9941 / JCM 11954 / NBRC 16129 / PRD-1).